The sequence spans 378 residues: Phospho-N-acetylmuramoyl-pentapeptide-transferase (378 aa).

10 consecutive transmembrane segments (helical) span residues 27–47, 74–94, 96–116, 135–155, 184–204, 216–236, 256–276, 280–300, 305–325, and 355–375; these read TAFASLTALFLCIALGPWLIN, TMGGVLIVISIVIPTLLWADL, YPYVWIALAGLLGYGWIGFLD, LVYQFIMGFAFAASLLVMRAY, WTYVIGVAPFCIFVALVVVFY, GLAIGLMVIAAGALTVLAYAG, LTIFCGSMTGASLGFLWYNAH, IFMGDVGSLGLGGAMAVVAVL, ILLLFIGGIFVLEAFSVILQV, and KIIARFWIAGLVLALFALTTL.

It belongs to the glycosyltransferase 4 family. MraY subfamily. It depends on Mg(2+) as a cofactor.

The protein localises to the cell inner membrane. It carries out the reaction UDP-N-acetyl-alpha-D-muramoyl-L-alanyl-gamma-D-glutamyl-meso-2,6-diaminopimeloyl-D-alanyl-D-alanine + di-trans,octa-cis-undecaprenyl phosphate = di-trans,octa-cis-undecaprenyl diphospho-N-acetyl-alpha-D-muramoyl-L-alanyl-D-glutamyl-meso-2,6-diaminopimeloyl-D-alanyl-D-alanine + UMP. It functions in the pathway cell wall biogenesis; peptidoglycan biosynthesis. Functionally, catalyzes the initial step of the lipid cycle reactions in the biosynthesis of the cell wall peptidoglycan: transfers peptidoglycan precursor phospho-MurNAc-pentapeptide from UDP-MurNAc-pentapeptide onto the lipid carrier undecaprenyl phosphate, yielding undecaprenyl-pyrophosphoryl-MurNAc-pentapeptide, known as lipid I. This chain is Phospho-N-acetylmuramoyl-pentapeptide-transferase, found in Solibacter usitatus (strain Ellin6076).